Consider the following 230-residue polypeptide: Somatolactin (230 aa).

The N-terminal stretch at 1-23 (MNMMTVKQGVWAALLWPYLLAAS) is a signal peptide. 3 disulfide bridges follow: cysteine 28–cysteine 38, cysteine 88–cysteine 204, and cysteine 221–cysteine 229. 2 N-linked (GlcNAc...) asparagine glycosylation sites follow: asparagine 137 and asparagine 144.

This sequence belongs to the somatotropin/prolactin family.

It localises to the secreted. This is Somatolactin from Hippoglossus hippoglossus (Atlantic halibut).